Here is a 594-residue protein sequence, read N- to C-terminus: DELLA protein 1 (594 aa).

Residues 1–36 (MKREHQESFGGGVISNNNKTNTNHLNSSKNINFGEC) form a disordered region. A compositionally biased stretch (low complexity) spans 15–30 (SNNNKTNTNHLNSSKN). A DELLA motif motif is present at residues 61-65 (DELLA). In terms of domain architecture, GRAS spans 207 to 587 (VDTQETGVRL…RSLIATSAWK (381 aa)). The interval 214–268 (VRLVHTLMACAEAIQQKNLKLAEALVKHISLLASLQTGAMRKVASYFAQALARRI) is leucine repeat I (LRI). Residues 216 to 253 (LVHTLMACAEAIQQKNLKLAEALVKHISLLASLQTGAM) form a required for possible homodimerization region. Positions 221–225 (MACAE) match the LxCxE motif; degenerate motif. The tract at residues 285–350 (HMHFYESSPY…GGPPTFRLTG (66 aa)) is VHIID. Residues 316-320 (VHVID) carry the VHIID motif. The segment at 364 to 396 (QVGWKLAQLAQTIGVQFEFRGFVCNSIADLDPN) is leucine repeat II (LRII). The PFYRE stretch occupies residues 406–508 (VAVNSVFELH…EIYLGKQICN (103 aa)). The LXXLL motif; degenerate signature appears at 414–418 (LHTML). An SAW region spans residues 511-587 (AYEGVDRVER…RSLIATSAWK (77 aa)).

It belongs to the GRAS family. DELLA subfamily. In terms of assembly, may be a homodimer. Ubiquitinated. Upon GA application it is ubiquitinated, leading to its subsequent degradation. In terms of tissue distribution, strongly expressed in the vascular tissue and endodermis but barely in the inner cortical cells where arbuscule are formed during arbuscular mycorrhizal (AM) symbiosis.

It localises to the nucleus. Its function is as follows. Probable transcriptional regulator that acts as a repressor of the gibberellin (GA) signaling pathway. Probably acts by participating in large multiprotein complexes that repress transcription of GA-inducible genes. Upon GA application, it is degraded by the proteasome, allowing the GA signaling pathway. Together with DELLA2, required to enable arbuscule development during arbuscular mycorrhizal (AM) symbiosis with AM fungi (e.g. Glomus versiforme) via the regulation of RAM1 which, in turn, regulates various AM genes (e.g. NSP1, NSP2, PT4, LEC5, RAM2, EXO70I, STR and RAD1). The chain is DELLA protein 1 from Medicago truncatula (Barrel medic).